Consider the following 21-residue polypeptide: Japonicin-2 (21 aa).

Cysteines 14 and 21 form a disulfide.

Expressed by the skin glands.

It is found in the secreted. Functionally, antibacterial activity against the Gram-negative bacterium E.coli and the Gram-positive bacterium S.aureus. This Rana japonica (Japanese reddish frog) protein is Japonicin-2.